The following is a 227-amino-acid chain: Cytochrome c oxidase subunit 2 (227 aa).

Topologically, residues 1-14 (MAYPMQLGLQDATS) are mitochondrial intermembrane. The helical transmembrane segment at 15–45 (PIMEELTDFHDHTLMIVFLISTLVLYIISLM) threads the bilayer. At 46 to 59 (LTTKLTHTNTMDAQ) the chain is on the mitochondrial matrix side. Residues 60–87 (EVETVWTILPAIILIMIALPSLRILYMM) traverse the membrane as a helical segment. Residues 88–227 (DEINDPYLTV…QFESWTSSMT (140 aa)) lie on the Mitochondrial intermembrane side of the membrane. 6 residues coordinate Cu cation: H161, C196, E198, C200, H204, and M207. E198 lines the Mg(2+) pocket.

The protein belongs to the cytochrome c oxidase subunit 2 family. Component of the cytochrome c oxidase (complex IV, CIV), a multisubunit enzyme composed of 14 subunits. The complex is composed of a catalytic core of 3 subunits MT-CO1, MT-CO2 and MT-CO3, encoded in the mitochondrial DNA, and 11 supernumerary subunits COX4I, COX5A, COX5B, COX6A, COX6B, COX6C, COX7A, COX7B, COX7C, COX8 and NDUFA4, which are encoded in the nuclear genome. The complex exists as a monomer or a dimer and forms supercomplexes (SCs) in the inner mitochondrial membrane with NADH-ubiquinone oxidoreductase (complex I, CI) and ubiquinol-cytochrome c oxidoreductase (cytochrome b-c1 complex, complex III, CIII), resulting in different assemblies (supercomplex SCI(1)III(2)IV(1) and megacomplex MCI(2)III(2)IV(2)). Found in a complex with TMEM177, COA6, COX18, COX20, SCO1 and SCO2. Interacts with TMEM177 in a COX20-dependent manner. Interacts with COX20. Interacts with COX16. It depends on Cu cation as a cofactor.

It is found in the mitochondrion inner membrane. It carries out the reaction 4 Fe(II)-[cytochrome c] + O2 + 8 H(+)(in) = 4 Fe(III)-[cytochrome c] + 2 H2O + 4 H(+)(out). Its function is as follows. Component of the cytochrome c oxidase, the last enzyme in the mitochondrial electron transport chain which drives oxidative phosphorylation. The respiratory chain contains 3 multisubunit complexes succinate dehydrogenase (complex II, CII), ubiquinol-cytochrome c oxidoreductase (cytochrome b-c1 complex, complex III, CIII) and cytochrome c oxidase (complex IV, CIV), that cooperate to transfer electrons derived from NADH and succinate to molecular oxygen, creating an electrochemical gradient over the inner membrane that drives transmembrane transport and the ATP synthase. Cytochrome c oxidase is the component of the respiratory chain that catalyzes the reduction of oxygen to water. Electrons originating from reduced cytochrome c in the intermembrane space (IMS) are transferred via the dinuclear copper A center (CU(A)) of subunit 2 and heme A of subunit 1 to the active site in subunit 1, a binuclear center (BNC) formed by heme A3 and copper B (CU(B)). The BNC reduces molecular oxygen to 2 water molecules using 4 electrons from cytochrome c in the IMS and 4 protons from the mitochondrial matrix. This Cratogeomys castanops (Yellow-faced pocket gopher) protein is Cytochrome c oxidase subunit 2 (MT-CO2).